The following is a 309-amino-acid chain: Methionyl-tRNA formyltransferase (309 aa).

109-112 lines the (6S)-5,6,7,8-tetrahydrofolate pocket; that stretch reads SLLP.

The protein belongs to the Fmt family.

The enzyme catalyses L-methionyl-tRNA(fMet) + (6R)-10-formyltetrahydrofolate = N-formyl-L-methionyl-tRNA(fMet) + (6S)-5,6,7,8-tetrahydrofolate + H(+). Its function is as follows. Attaches a formyl group to the free amino group of methionyl-tRNA(fMet). The formyl group appears to play a dual role in the initiator identity of N-formylmethionyl-tRNA by promoting its recognition by IF2 and preventing the misappropriation of this tRNA by the elongation apparatus. This chain is Methionyl-tRNA formyltransferase, found in Chloroflexus aggregans (strain MD-66 / DSM 9485).